A 518-amino-acid chain; its full sequence is GMP synthase [glutamine-hydrolyzing] (518 aa).

The Glutamine amidotransferase type-1 domain occupies threonine 8 to asparagine 201. The active-site Nucleophile is the cysteine 85. Residues histidine 175 and glutamate 177 contribute to the active site. In terms of domain architecture, GMPS ATP-PPase spans tryptophan 202–arginine 393. Serine 229–serine 235 serves as a coordination point for ATP.

In terms of assembly, homodimer.

It carries out the reaction XMP + L-glutamine + ATP + H2O = GMP + L-glutamate + AMP + diphosphate + 2 H(+). The protein operates within purine metabolism; GMP biosynthesis; GMP from XMP (L-Gln route): step 1/1. Functionally, catalyzes the synthesis of GMP from XMP. This is GMP synthase [glutamine-hydrolyzing] from Bartonella henselae (strain ATCC 49882 / DSM 28221 / CCUG 30454 / Houston 1) (Rochalimaea henselae).